Here is a 47-residue protein sequence, read N- to C-terminus: Wound-induced basic protein (47 aa).

Positions 1–47 (MIYDVNSPLFRSFLSQKGGSSDKRKTEEQKPKEHRPKASENKPIMTE) are disordered. Basic and acidic residues predominate over residues 20–40 (SSDKRKTEEQKPKEHRPKASE).

In terms of tissue distribution, abundant in radicals and epicotyls of seedlings and higher in the roots than in stems and leaves of mature plants.

This Phaseolus vulgaris (Kidney bean) protein is Wound-induced basic protein (PR4).